A 160-amino-acid polypeptide reads, in one-letter code: MTNTKGKRRGTRYMFSRPFRKHGVVPLATYMRIYKKGDIVDIKGMGTVQKGMPHKCYHGKTGRVYNVTQHAVGIIVNKQVKGKILAKRINVRIEHIKHSKSRDSFLKRVKENDQKKKEAKEKGTWVQLKRQPAPPREAHFVRTNGKEPELLEPIPYEFMA.

Basic and acidic residues-rich tracts occupy residues 112–123 and 136–145; these read NDQKKKEAKEKG and REAHFVRTNG. Positions 112-145 are disordered; that stretch reads NDQKKKEAKEKGTWVQLKRQPAPPREAHFVRTNG.

Belongs to the eukaryotic ribosomal protein eL21 family. In terms of assembly, component of the large ribosomal subunit.

The protein resides in the cytoplasm. Its subcellular location is the cytosol. It localises to the endoplasmic reticulum. In terms of biological role, component of the large ribosomal subunit. The ribosome is a large ribonucleoprotein complex responsible for the synthesis of proteins in the cell. The sequence is that of Large ribosomal subunit protein eL21 from Mus musculus (Mouse).